A 251-amino-acid polypeptide reads, in one-letter code: MSEGESKSTHFGYKTVEADKKAELVAGVFHSVAAKYDIMNDVMSFGIHRFWKRHTIEVSGARPGMKVLDLAGGTGDLTAKFSHLVGDKGEVVLADINDSMLKVGRTKLRDKGIVNNVSYVQANAEALPFPDNHFDIITIAFGLRNVTDKDAALRSMNRVLKPGGKLLVLEFSKPQHEIMRKVYDLYSFKVLPKMGELITKDADSYEYLAESIRMHPDQDTLKQMMVDAGFEQVDYTNMTDGIVALHRGYKF.

S-adenosyl-L-methionine is bound by residues T74, D95, and 123 to 124; that span reads NA.

Belongs to the class I-like SAM-binding methyltransferase superfamily. MenG/UbiE family.

The catalysed reaction is a 2-demethylmenaquinol + S-adenosyl-L-methionine = a menaquinol + S-adenosyl-L-homocysteine + H(+). It carries out the reaction a 2-methoxy-6-(all-trans-polyprenyl)benzene-1,4-diol + S-adenosyl-L-methionine = a 5-methoxy-2-methyl-3-(all-trans-polyprenyl)benzene-1,4-diol + S-adenosyl-L-homocysteine + H(+). The protein operates within quinol/quinone metabolism; menaquinone biosynthesis; menaquinol from 1,4-dihydroxy-2-naphthoate: step 2/2. Its pathway is cofactor biosynthesis; ubiquinone biosynthesis. In terms of biological role, methyltransferase required for the conversion of demethylmenaquinol (DMKH2) to menaquinol (MKH2) and the conversion of 2-polyprenyl-6-methoxy-1,4-benzoquinol (DDMQH2) to 2-polyprenyl-3-methyl-6-methoxy-1,4-benzoquinol (DMQH2). This chain is Ubiquinone/menaquinone biosynthesis C-methyltransferase UbiE, found in Shewanella putrefaciens (strain CN-32 / ATCC BAA-453).